A 397-amino-acid polypeptide reads, in one-letter code: DNA-directed RNA polymerase subunit Rpo1C (397 aa).

Belongs to the RNA polymerase beta' chain family. In terms of assembly, part of the RNA polymerase complex.

The protein localises to the cytoplasm. The catalysed reaction is RNA(n) + a ribonucleoside 5'-triphosphate = RNA(n+1) + diphosphate. DNA-dependent RNA polymerase (RNAP) catalyzes the transcription of DNA into RNA using the four ribonucleoside triphosphates as substrates. Forms part of the jaw domain. This is DNA-directed RNA polymerase subunit Rpo1C from Halobacterium salinarum (strain ATCC 29341 / DSM 671 / R1).